The following is a 609-amino-acid chain: Autophagy-related protein 22-1 (609 aa).

Transmembrane regions (helical) follow at residues 95–115, 117–137, 151–171, and 176–196; these read YYAG…GVEI, TASF…ILII, LLLV…LGVV, and MVGA…FVLL. Residues 214–238 form a disordered region; it reads AREPPPALDGSRAQEGHSDTTNDID. Residues 225–238 are compositionally biased toward basic and acidic residues; sequence RAQEGHSDTTNDID. Asparagine 244 carries an N-linked (GlcNAc...) asparagine glycan. The chain crosses the membrane as a helical span at residues 287 to 307; the sequence is IGIGYIGAIILQIVCILVVIA. Asparagine 309 carries an N-linked (GlcNAc...) asparagine glycan. The next 3 helical transmembrane spans lie at 317 to 337, 381 to 401, and 415 to 435; these read LVLF…ALWL, ILLF…VSGT, and AALG…AFSW. Asparagine 443 is a glycosylation site (N-linked (GlcNAc...) asparagine). A run of 4 helical transmembrane segments spans residues 450-470, 487-509, 522-542, and 552-572; these read IIAC…GFIP, FPLG…SFFG, ALYA…VGII, and AFVF…LVDV.

It belongs to the ATG22 family.

It is found in the vacuole membrane. In terms of biological role, vacuolar effluxer which mediate the efflux of amino acids resulting from autophagic degradation. The release of autophagic amino acids allows the maintenance of protein synthesis and viability during nitrogen starvation. This chain is Autophagy-related protein 22-1 (atg22-1), found in Neosartorya fischeri (strain ATCC 1020 / DSM 3700 / CBS 544.65 / FGSC A1164 / JCM 1740 / NRRL 181 / WB 181) (Aspergillus fischerianus).